The chain runs to 129 residues: Transcription antitermination protein NusB (129 aa).

It belongs to the NusB family.

Its function is as follows. Involved in transcription antitermination. Required for transcription of ribosomal RNA (rRNA) genes. Binds specifically to the boxA antiterminator sequence of the ribosomal RNA (rrn) operons. This Staphylococcus aureus (strain USA300 / TCH1516) protein is Transcription antitermination protein NusB.